We begin with the raw amino-acid sequence, 135 residues long: Large ribosomal subunit protein mL54 (135 aa).

The protein belongs to the mitochondrion-specific ribosomal protein mL54 family. In terms of assembly, component of the mitochondrial ribosome large subunit (39S) which comprises a 16S rRNA and about 50 distinct proteins.

Its subcellular location is the mitochondrion. The protein is Large ribosomal subunit protein mL54 (mrpl54) of Danio rerio (Zebrafish).